A 354-amino-acid chain; its full sequence is Guanine nucleotide-binding protein G(o) subunit alpha (354 aa).

The N-myristoyl glycine moiety is linked to residue Gly-2. The S-palmitoyl cysteine moiety is linked to residue Cys-3. In terms of domain architecture, G-alpha spans 32 to 354 (KDVKLLLLGA…ANNLRGCGLY (323 aa)). The G1 motif stretch occupies residues 35 to 48 (KLLLLGAGESGKST). GTP-binding residues include Glu-43, Lys-46, Ser-47, Thr-48, Ser-152, Leu-176, Arg-177, Thr-178, and Arg-179. Residue Ser-47 coordinates Mg(2+). A G2 motif region spans residues 174 to 182 (DILRTRVKT). Thr-182 serves as a coordination point for Mg(2+). Residues 197-206 (FRLFDVGGQR) form a G3 motif region. The residue at position 205 (Gln-205) is a 5-glutamyl histamine. The interval 266–273 (ILFLNKKD) is G4 motif. Positions 270, 273, and 325 each coordinate GTP. Residues 324–329 (TCATDT) form a G5 motif region. Cys-351 carries the S-palmitoyl cysteine lipid modification.

It belongs to the G-alpha family. G(i/o/t/z) subfamily. G proteins are composed of 3 units; alpha, beta and gamma. The alpha chain contains the guanine nucleotide binding site. Forms a complex with GNB1 and GNG3. Interacts with RGS14. Interacts with RGS16. Interacts with RGS19. Interacts (when palmitoylated) with ADGRG3. In terms of processing, histaminylated at Gln-205 residues by TGM2.

It is found in the cell membrane. The protein localises to the membrane. The enzyme catalyses GTP + H2O = GDP + phosphate + H(+). Its activity is regulated as follows. The GTPase activity is promoted by GTPAse activators, such as RGS14, RGS16 and RGS19. Functionally, guanine nucleotide-binding proteins (G proteins) function as transducers downstream of G protein-coupled receptors (GPCRs) in numerous signaling cascades. The alpha chain contains the guanine nucleotide binding site and alternates between an active, GTP-bound state and an inactive, GDP-bound state. Signaling by an activated GPCR promotes GDP release and GTP binding. The alpha subunit has a low GTPase activity that converts bound GTP to GDP, thereby terminating the signal. Both GDP release and GTP hydrolysis are modulated by numerous regulatory proteins. Signaling is mediated via effector proteins, such as adenylate cyclase. Inhibits adenylate cyclase activity, leading to decreased intracellular cAMP levels. The polypeptide is Guanine nucleotide-binding protein G(o) subunit alpha (GNAO1) (Bos taurus (Bovine)).